The sequence spans 849 residues: Pre-mRNA-processing ATP-dependent RNA helicase PRP5 (849 aa).

Residues 13–81 (ESLLEERRKK…RKRKNEFRKS (69 aa)) adopt a coiled-coil conformation. The tract at residues 28-138 (QKKAQFDAQK…PEHDNEKDPL (111 aa)) is disordered. Residues 38–54 (ENQTSRNDIVTNSLEGK) show a composition bias toward polar residues. Over residues 55 to 85 (QTTEKFTERQERVKEELRKRKNEFRKSDEPV) the composition is skewed to basic and acidic residues. The span at 89 to 102 (PSKKKSKRSKVKKK) shows a compositional bias: basic residues. Basic and acidic residues predominate over residues 120–138 (RSKEHIQKVPEHDNEKDPL). The Q motif motif lies at 255–284 (TKWSQLGLSTDTMVLITEKLHFGSLTPIQS). The 181-residue stretch at 287–467 (LPAIMSGRDV…VRVLHSPISI (181 aa)) folds into the Helicase ATP-binding domain. 300–307 (SKTGSGKT) is an ATP binding site. The DEAD box signature appears at 415–418 (DEAD). In terms of domain architecture, Helicase C-terminal spans 502–661 (ERSEFFDEVQ…LDPLQAKELQ (160 aa)). Residues 689–728 (NIKSKREEAQNKDLELKKNDKRSDDLEKKINNPHEGHDSE) are compositionally biased toward basic and acidic residues. Positions 689–731 (NIKSKREEAQNKDLELKKNDKRSDDLEKKINNPHEGHDSEPES) are disordered.

It belongs to the DEAD box helicase family. DDX46/PRP5 subfamily. In terms of assembly, interacts with the U2 snRNP and HSH155.

The protein resides in the nucleus. It carries out the reaction ATP + H2O = ADP + phosphate + H(+). Its function is as follows. ATP-dependent RNA helicase involved spliceosome assembly and in nuclear splicing. Catalyzes an ATP-dependent conformational change of U2 snRNP. Bridges U1 and U2 snRNPs and enables stable U2 snRNP association with intron RNA. The sequence is that of Pre-mRNA-processing ATP-dependent RNA helicase PRP5 (PRP5) from Saccharomyces cerevisiae (strain YJM789) (Baker's yeast).